The primary structure comprises 422 residues: MGCRTSKVLPEPPGDVQLDLVKKVEPHQTDVYKNFIKYDGGGEKTGSPSPQGQSQAVAKVSQSPPPANDQPEPADSHRKKVAKYRAKFDPRVTAKYDIKALIGRGSFSRVVRVEHRSTRQPYAIKMIETRYREGREVCESELCVLRRVRHTNIIQLMEVFETAERVYMVMELATGGELFDRIITRGSFTERDATRVLQMVLDGVKYLHTLGITHRDLKPENLLYYHPGADSKIMITDFGLASTRKKGDECLMKTTCGTPEYIAPEILVRKPYTNAVDMWALGVISYILLSGTMPFEDDNRMRLYRQILKGKYSFSGEPWPSVSNLAKDFIDRVLTVDPNERLSAGQALKHPWIVSMAASSSMKNLHRSISQNLLKRASSRCHSTKSSQSTRSSRSTKSSKARRLREKELRELNRRYQQQCNG.

Positions 35-80 (FIKYDGGGEKTGSPSPQGQSQAVAKVSQSPPPANDQPEPADSHRKK) are disordered. Positions 46 to 62 (GSPSPQGQSQAVAKVSQ) are enriched in polar residues. Positions 96-353 (YDIKALIGRG…AGQALKHPWI (258 aa)) constitute a Protein kinase domain. ATP contacts are provided by residues 102–110 (IGRGSFSRV) and Lys-125. The active-site Proton acceptor is Asp-216. Residues 376-422 (RASSRCHSTKSSQSTRSSRSTKSSKARRLREKELRELNRRYQQQCNG) form a disordered region. Residues 384 to 396 (TKSSQSTRSSRST) show a composition bias toward low complexity. The segment covering 405–414 (REKELRELNR) has biased composition (basic and acidic residues).

Belongs to the protein kinase superfamily. CAMK Ser/Thr protein kinase family.

The enzyme catalyses L-seryl-[protein] + ATP = O-phospho-L-seryl-[protein] + ADP + H(+). It carries out the reaction L-threonyl-[protein] + ATP = O-phospho-L-threonyl-[protein] + ADP + H(+). This Danio rerio (Zebrafish) protein is Serine/threonine-protein kinase H1 homolog (pskh1).